We begin with the raw amino-acid sequence, 593 residues long: Bifunctional purine biosynthesis protein ATIC (593 aa).

One can recognise an MGS-like domain in the interval 1-147 (MAARQQLALL…KNHARVTVVC (147 aa)). The tract at residues 1-199 (MAARQQLALL…ISDYFRKEYS (199 aa)) is IMP cyclohydrolase. Residues 13–15 (SEK), 35–38 (SGGT), 65–68 (RVKT), 102–103 (CN), and 126–127 (DI) each bind IMP. Lysine 138 acts as the Proton donor/acceptor; for FAICAR cyclization activity in catalysis. Lysine 200 is modified (N6-acetyllysine). Residues 200–593 (KGVSQLPLRY…IHTNLRLFHH (394 aa)) are AICAR formyltransferase. 5-amino-1-(5-phospho-beta-D-ribosyl)imidazole-4-carboxamide contacts are provided by residues 208-209 (RY), histidine 268, glycine 317, aspartate 340, asparagine 432, and arginine 452. Residue histidine 268 is the Proton acceptor; for AICAR formyltransferase activity of the active site. Isoleucine 453 is a binding site for (6R)-10-formyltetrahydrofolate. Phenylalanine 542 is a 5-amino-1-(5-phospho-beta-D-ribosyl)imidazole-4-carboxamide binding site. Residues aspartate 547 and 566–567 (SA) each bind (6R)-10-formyltetrahydrofolate. A 5-amino-1-(5-phospho-beta-D-ribosyl)imidazole-4-carboxamide-binding site is contributed by arginine 589.

The protein belongs to the PurH family. Homodimer. Associates with internalized INSR complexes on Golgi/endosomal membranes. Interacts with INSR; ATIC together with PRKAA2/AMPK2 and HACD3/PTPLAD1 is proposed to be part of a signaling network regulating INSR autophosphorylation and endocytosis.

Its subcellular location is the cytoplasm. It is found in the cytosol. The catalysed reaction is (6R)-10-formyltetrahydrofolate + 5-amino-1-(5-phospho-beta-D-ribosyl)imidazole-4-carboxamide = 5-formamido-1-(5-phospho-D-ribosyl)imidazole-4-carboxamide + (6S)-5,6,7,8-tetrahydrofolate. The enzyme catalyses 10-formyldihydrofolate + 5-amino-1-(5-phospho-beta-D-ribosyl)imidazole-4-carboxamide = 5-formamido-1-(5-phospho-D-ribosyl)imidazole-4-carboxamide + 7,8-dihydrofolate. It carries out the reaction IMP + H2O = 5-formamido-1-(5-phospho-D-ribosyl)imidazole-4-carboxamide. The protein operates within purine metabolism; IMP biosynthesis via de novo pathway; 5-formamido-1-(5-phospho-D-ribosyl)imidazole-4-carboxamide from 5-amino-1-(5-phospho-D-ribosyl)imidazole-4-carboxamide (10-formyl THF route): step 1/1. It functions in the pathway purine metabolism; IMP biosynthesis via de novo pathway; IMP from 5-formamido-1-(5-phospho-D-ribosyl)imidazole-4-carboxamide: step 1/1. AMP and XMP inhibit AICAR formyltransferase activity. AICAR formyltransferase activity is competitively inhibited by 2-[5-hydroxy-3-methyl-1-(2-methyl-4-sulfo-phenyl)-1H-pyrazol-4-ylazo]-4-sulfo-benzoic acid (326203-A). FAICAR cyclization is competitively inhibited by 1,5-dihydroimidazo[4,5-c][1,2,6]thiadiazin-4(3H)-one-2,2-dioxide and the corresponding nucleoside and nucleoside monophosphate. In terms of biological role, bifunctional enzyme that catalyzes the last two steps of purine biosynthesis. Acts as a transformylase that incorporates a formyl group to the AMP analog AICAR (5-amino-1-(5-phospho-beta-D-ribosyl)imidazole-4-carboxamide) to produce the intermediate formyl-AICAR (FAICAR). Can use both 10-formyldihydrofolate and 10-formyltetrahydrofolate as the formyl donor in this reaction. Also catalyzes the cyclization of FAICAR to inosine monophosphate (IMP). Promotes insulin receptor/INSR autophosphorylation and is involved in INSR internalization. The protein is Bifunctional purine biosynthesis protein ATIC (ATIC) of Gallus gallus (Chicken).